A 483-amino-acid chain; its full sequence is Rhamnulokinase (483 aa).

11–15 is a binding site for ATP; the sequence is ASSGR. Substrate-binding positions include Gly79 and 234 to 236; that span reads HDT. Catalysis depends on Asp235, which acts as the Proton acceptor. Thr257 is an ATP binding site. Asn294 contributes to the substrate binding site. ATP is bound at residue Gln302. A disulfide bridge connects residues Cys352 and Cys369. Gly401 lines the ATP pocket.

This sequence belongs to the rhamnulokinase family. Mg(2+) is required as a cofactor.

It catalyses the reaction L-rhamnulose + ATP = L-rhamnulose 1-phosphate + ADP + H(+). Its pathway is carbohydrate degradation; L-rhamnose degradation; glycerone phosphate from L-rhamnose: step 2/3. Involved in the catabolism of L-rhamnose (6-deoxy-L-mannose). Catalyzes the transfer of the gamma-phosphate group from ATP to the 1-hydroxyl group of L-rhamnulose to yield L-rhamnulose 1-phosphate. This chain is Rhamnulokinase, found in Listeria monocytogenes serotype 4b (strain CLIP80459).